The sequence spans 1272 residues: Ubiquitin carboxyl-terminal hydrolase 2 (1272 aa).

Positions 736–1258 constitute a USP domain; it reads TGINNIGNTC…TPYFLVYVKQ (523 aa). The active-site Nucleophile is the C745. Residues 884–918 form a disordered region; it reads DGLNGDVGTDANRKKNESNDAEVSENEDTTGLTSP. Over residues 902–911 the composition is skewed to acidic residues; the sequence is NDAEVSENED. Phosphoserine is present on S907. H1209 acts as the Proton acceptor in catalysis.

Belongs to the peptidase C19 family. As to quaternary structure, forms a ternary complex with RSP5 and RUP1. Interacts with RSP5. Interacts with FZO1.

The catalysed reaction is Thiol-dependent hydrolysis of ester, thioester, amide, peptide and isopeptide bonds formed by the C-terminal Gly of ubiquitin (a 76-residue protein attached to proteins as an intracellular targeting signal).. Functionally, has an ATP-independent isopeptidase activity, cleaving at the C-terminus of the ubiquitin moiety in natural or engineered linear fusion proteins, irrespective of their size or the presence of an N-terminal extension to ubiquitin. Hydrolyzes polyubiquitinated 'Lys-63' polyubiquitin chains in RPO21, producing mono-ubiquitinated RNA polymerase II. Removes ubiquitin chains that initiate proteolysis of FZO1 and inhibit mitochondrial fusion. The polypeptide is Ubiquitin carboxyl-terminal hydrolase 2 (UBP2) (Saccharomyces cerevisiae (strain ATCC 204508 / S288c) (Baker's yeast)).